The following is a 329-amino-acid chain: Phenylalanine--tRNA ligase alpha subunit (329 aa).

Belongs to the class-II aminoacyl-tRNA synthetase family. Phe-tRNA synthetase alpha subunit type 1 subfamily. In terms of assembly, tetramer of two alpha and two beta subunits. Mg(2+) serves as cofactor.

It localises to the cytoplasm. It catalyses the reaction tRNA(Phe) + L-phenylalanine + ATP = L-phenylalanyl-tRNA(Phe) + AMP + diphosphate + H(+). The sequence is that of Phenylalanine--tRNA ligase alpha subunit (pheS) from Buchnera aphidicola subsp. Acyrthosiphon pisum (strain APS) (Acyrthosiphon pisum symbiotic bacterium).